Consider the following 283-residue polypeptide: MAHIIDGKAIAAKIRSEIASGVRELQGKGVTPGLAVVLVGDDQASRVYVSMKEKACNDAGIFSVEHKLAAETSEAELLALVELLNNDPKIHGILVQLPLPSQIDTDKVLEAISPFKDVDGFHPYNVGRLSVGKPVFQPCTPYGVMVMLREAGVELKGKEVVVVGRSNIVGKPVAMMCLAEHATVTLCHSRTRDLPDVVRRADVVIAAVGRPEMIKGDWIKEGAVVIDVGINRVGEKKLVGDVEFAGASQRASAITPVPGGVGPMTITMLLQNTLESAKRGMAE.

Residues 164-166 (GRS), S189, and I230 each bind NADP(+).

This sequence belongs to the tetrahydrofolate dehydrogenase/cyclohydrolase family. As to quaternary structure, homodimer.

It catalyses the reaction (6R)-5,10-methylene-5,6,7,8-tetrahydrofolate + NADP(+) = (6R)-5,10-methenyltetrahydrofolate + NADPH. The enzyme catalyses (6R)-5,10-methenyltetrahydrofolate + H2O = (6R)-10-formyltetrahydrofolate + H(+). It functions in the pathway one-carbon metabolism; tetrahydrofolate interconversion. Its function is as follows. Catalyzes the oxidation of 5,10-methylenetetrahydrofolate to 5,10-methenyltetrahydrofolate and then the hydrolysis of 5,10-methenyltetrahydrofolate to 10-formyltetrahydrofolate. The sequence is that of Bifunctional protein FolD from Pelobacter propionicus (strain DSM 2379 / NBRC 103807 / OttBd1).